We begin with the raw amino-acid sequence, 75 residues long: Sec-independent protein translocase protein TatA (75 aa).

The helical transmembrane segment at 1–21 threads the bilayer; that stretch reads MFGLSPAQLIILLVVILLIFG.

The protein belongs to the TatA/E family. The Tat system comprises two distinct complexes: a TatABC complex, containing multiple copies of TatA, TatB and TatC subunits, and a separate TatA complex, containing only TatA subunits. Substrates initially bind to the TatABC complex, which probably triggers association of the separate TatA complex to form the active translocon.

It is found in the cell inner membrane. In terms of biological role, part of the twin-arginine translocation (Tat) system that transports large folded proteins containing a characteristic twin-arginine motif in their signal peptide across membranes. TatA could form the protein-conducting channel of the Tat system. The polypeptide is Sec-independent protein translocase protein TatA (Haemophilus influenzae (strain PittEE)).